A 497-amino-acid chain; its full sequence is Putative diacyglycerol O-acyltransferase MT3584 (497 aa).

His143 serves as the catalytic Proton acceptor.

The protein belongs to the long-chain O-acyltransferase family.

It catalyses the reaction an acyl-CoA + a 1,2-diacyl-sn-glycerol = a triacyl-sn-glycerol + CoA. Its pathway is glycerolipid metabolism; triacylglycerol biosynthesis. In Mycobacterium tuberculosis (strain CDC 1551 / Oshkosh), this protein is Putative diacyglycerol O-acyltransferase MT3584.